A 103-amino-acid chain; its full sequence is Histone H4.2 (103 aa).

Positions 1–14 (MTGRGKGGKGLGKG) are enriched in gly residues. The segment at 1–20 (MTGRGKGGKGLGKGGAKRHR) is disordered. K6 carries the post-translational modification N6-acetyl-N6-methyllysine; alternate. 3 positions are modified to N6-methyllysine; alternate: K6, K9, and K13. K13 is modified (N6-acetyl-N6-methyllysine; alternate). The DNA-binding element occupies 17–21 (KRHRK). K92 is modified (N6-glutaryllysine).

This sequence belongs to the histone H4 family. In terms of assembly, the nucleosome is a histone octamer containing two molecules each of H2A, H2B, H3 and H4 assembled in one H3-H4 heterotetramer and two H2A-H2B heterodimers. The octamer wraps approximately 147 bp of DNA. Glutarylation at Lys-92 (H4K91glu) destabilizes nucleosomes by promoting dissociation of the H2A-H2B dimers from nucleosomes.

The protein resides in the nucleus. It localises to the chromosome. Functionally, core component of nucleosome. Nucleosomes wrap and compact DNA into chromatin, limiting DNA accessibility to the cellular machineries which require DNA as a template. Histones thereby play a central role in transcription regulation, DNA repair, DNA replication and chromosomal stability. DNA accessibility is regulated via a complex set of post-translational modifications of histones, also called histone code, and nucleosome remodeling. This is Histone H4.2 (H4.2) from Talaromyces funiculosus (Fruitlet core rot fungus).